Reading from the N-terminus, the 366-residue chain is GDSL esterase/lipase LTL1 (366 aa).

The first 27 residues, 1 to 27, serve as a signal peptide directing secretion; sequence MNINCSPLGFLISLFFIVTFLAPQVKS. The active-site Nucleophile is the Ser36. N-linked (GlcNAc...) asparagine glycosylation occurs at Asn117. Residues Asp326 and His329 contribute to the active site. The N-linked (GlcNAc...) asparagine glycan is linked to Asn354.

This sequence belongs to the 'GDSL' lipolytic enzyme family. As to quaternary structure, binds to VLG at the endomembrane system. As to expression, mostly expressed in flowers, reproductive stems and rosette leaves, and, to a lower extent, in roots.

It is found in the secreted. Its function is as follows. Involved in the mechanisms of salt tolerance. Mediates resistance to LiCl and NaCl. The chain is GDSL esterase/lipase LTL1 from Arabidopsis thaliana (Mouse-ear cress).